Reading from the N-terminus, the 426-residue chain is D-cysteine desulfhydrase 1, mitochondrial (426 aa).

Residues 1–63 (MARGAHQAPG…IGSFLSKRPY (63 aa)) constitute a mitochondrion transit peptide. Lysine 119 carries the post-translational modification N6-(pyridoxal phosphate)lysine. The active-site Nucleophile is serine 146.

This sequence belongs to the ACC deaminase/D-cysteine desulfhydrase family. Homodimer. Pyridoxal 5'-phosphate serves as cofactor. As to expression, present in seeds (at protein level).

It localises to the mitochondrion. It carries out the reaction D-cysteine + H2O = hydrogen sulfide + pyruvate + NH4(+) + H(+). Inhibited by L-cysteine (L-cys). Catalyzes the production of hydrogen sulfide (H2S) from D-cysteine (D-cys). The protein is D-cysteine desulfhydrase 1, mitochondrial of Oryza sativa subsp. japonica (Rice).